A 475-amino-acid polypeptide reads, in one-letter code: MMNDGKQQSTFLFHDYETFGTHPALDRPAQFAAIRTDSEFNVIGEPEVFYCKPADDYLPQPGAVLITGITPQEARAKGENEAAFAARIHSLFTVPKTCILGYNNVRFDDEVTRNIFYRNFYDPYAWSWQHDNSRWDLLDVMRACYALRPEGINWPENDDGLPSFRLEHLTKANGIEHSNAHDAMADVYATIAMAKLVKTRQPRLFDYLFTHRNKHKLMALIDVPQMKPLVHVSGMFGAWRGNTSWVAPLAWHPENRNAVIMVDLAGDISPLLELDSDTLRERLYTAKTDLGDNAAVPVKLVHINKCPVLAQANTLRPEDADRLGINRQHCLDNLKILRENPQVREKVVAIFAEAEPFTPSDNVDAQLYNGFFSDADRAAMKIVLETEPRNLPALDITFVDKRIEKLLFNYRARNFPGTLDYAEQQRWLEHRRQVFTPEFLQGYADELQMLVQQYADDKEKVALLKALWQYAEEIV.

In terms of domain architecture, Exonuclease spans 13–192; the sequence is FHDYETFGTH…AMADVYATIA (180 aa). Mg(2+) is bound by residues D15 and E17. 2 residues coordinate substrate: E17 and R165. D186 provides a ligand contact to Mg(2+). The ExoI SH3-like domain occupies 202–355; the sequence is PRLFDYLFTH…KVVAIFAEAE (154 aa). The ExoI C-terminal domain occupies 358-475; the sequence is TPSDNVDAQL…ALWQYAEEIV (118 aa).

Monomer. Interacts with ssb (via C-terminus); this interaction stimulates the exonuclease activity by recruiting the enzyme to its substrate. Requires Mg(2+) as cofactor.

The enzyme catalyses Exonucleolytic cleavage in the 3'- to 5'-direction to yield nucleoside 5'-phosphates.. Its activity is regulated as follows. Inhibited by 10 mM EDTA. Functionally, degrades single-stranded DNA (ssDNA) in a highly processive manner. Also functions as a DNA deoxyribophosphodiesterase that releases deoxyribose-phosphate moieties following the cleavage of DNA at an apurinic/apyrimidinic (AP) site by either an AP endonuclease or AP lyase. The chain is Exodeoxyribonuclease I (sbcB) from Escherichia coli (strain K12).